A 77-amino-acid chain; its full sequence is Small ribosomal subunit protein bS20 (77 aa).

It belongs to the bacterial ribosomal protein bS20 family.

Binds directly to 16S ribosomal RNA. The protein is Small ribosomal subunit protein bS20 of Streptococcus agalactiae serotype Ia (strain ATCC 27591 / A909 / CDC SS700).